Reading from the N-terminus, the 428-residue chain is RF4 protein (428 aa).

Residues Asn8, Asn205, and Asn344 are each glycosylated (N-linked (GlcNAc...) asparagine).

Its function is as follows. Not known. In Kluyveromyces lactis (strain ATCC 8585 / CBS 2359 / DSM 70799 / NBRC 1267 / NRRL Y-1140 / WM37) (Yeast), this protein is RF4 protein (RF4).